We begin with the raw amino-acid sequence, 320 residues long: Fructose-1,6-bisphosphatase class 1 (320 aa).

Mg(2+)-binding residues include E84, D103, L105, and D106. Substrate contacts are provided by residues 106–109 (DGSS), N196, and K262. E268 contributes to the Mg(2+) binding site.

The protein belongs to the FBPase class 1 family. As to quaternary structure, homotetramer. It depends on Mg(2+) as a cofactor.

The protein resides in the cytoplasm. It carries out the reaction beta-D-fructose 1,6-bisphosphate + H2O = beta-D-fructose 6-phosphate + phosphate. The protein operates within carbohydrate biosynthesis; gluconeogenesis. The chain is Fructose-1,6-bisphosphatase class 1 from Shewanella amazonensis (strain ATCC BAA-1098 / SB2B).